The primary structure comprises 567 residues: Proline--tRNA ligase (567 aa).

This sequence belongs to the class-II aminoacyl-tRNA synthetase family. ProS type 1 subfamily. In terms of assembly, homodimer.

The protein resides in the cytoplasm. The catalysed reaction is tRNA(Pro) + L-proline + ATP = L-prolyl-tRNA(Pro) + AMP + diphosphate. Functionally, catalyzes the attachment of proline to tRNA(Pro) in a two-step reaction: proline is first activated by ATP to form Pro-AMP and then transferred to the acceptor end of tRNA(Pro). As ProRS can inadvertently accommodate and process non-cognate amino acids such as alanine and cysteine, to avoid such errors it has two additional distinct editing activities against alanine. One activity is designated as 'pretransfer' editing and involves the tRNA(Pro)-independent hydrolysis of activated Ala-AMP. The other activity is designated 'posttransfer' editing and involves deacylation of mischarged Ala-tRNA(Pro). The misacylated Cys-tRNA(Pro) is not edited by ProRS. The polypeptide is Proline--tRNA ligase (Stenotrophomonas maltophilia (strain K279a)).